A 29-amino-acid polypeptide reads, in one-letter code: Bacteriocin (29 aa).

Its subcellular location is the secreted. In terms of biological role, has antibacterial activity against strains of L.monocytogenes, L.lactis, B.subtilis, S.typhi, S.aureus, C.perfringens, E.aerogenes and M.luteus but not against E.coli, S.sonnei, S.pneumoniae, S.faecalis, P.aeruginosa, K.pneumoniae or P.vulgaris. This is Bacteriocin from Lactococcus lactis subsp. lactis (Streptococcus lactis).